A 149-amino-acid chain; its full sequence is Transcriptional repressor NrdR (149 aa).

A zinc finger lies at 3 to 34 (CPFCAAVDTKVIDSRLVSDGSQVRRRRQCLDC). Residues 49 to 139 (PRVIKSDEVR…VYRSFEDVRE (91 aa)) form the ATP-cone domain.

It belongs to the NrdR family. Requires Zn(2+) as cofactor.

Its function is as follows. Negatively regulates transcription of bacterial ribonucleotide reductase nrd genes and operons by binding to NrdR-boxes. In Yersinia pseudotuberculosis serotype O:1b (strain IP 31758), this protein is Transcriptional repressor NrdR.